Consider the following 308-residue polypeptide: Aspartate carbamoyltransferase catalytic subunit (308 aa).

2 residues coordinate carbamoyl phosphate: Arg-58 and Thr-59. Residue Lys-86 participates in L-aspartate binding. The carbamoyl phosphate site is built by Arg-108, His-136, and Gln-139. L-aspartate-binding residues include Arg-169 and Arg-227. Carbamoyl phosphate contacts are provided by Gly-268 and Pro-269.

Belongs to the aspartate/ornithine carbamoyltransferase superfamily. ATCase family. Heterododecamer (2C3:3R2) of six catalytic PyrB chains organized as two trimers (C3), and six regulatory PyrI chains organized as three dimers (R2).

The enzyme catalyses carbamoyl phosphate + L-aspartate = N-carbamoyl-L-aspartate + phosphate + H(+). Its pathway is pyrimidine metabolism; UMP biosynthesis via de novo pathway; (S)-dihydroorotate from bicarbonate: step 2/3. Functionally, catalyzes the condensation of carbamoyl phosphate and aspartate to form carbamoyl aspartate and inorganic phosphate, the committed step in the de novo pyrimidine nucleotide biosynthesis pathway. This Chloroflexus aggregans (strain MD-66 / DSM 9485) protein is Aspartate carbamoyltransferase catalytic subunit.